We begin with the raw amino-acid sequence, 92 residues long: MKTLLLTLVVVTIVCLDLGDSLICYQAYNTPQTCAPGENLCYTKTWCDYWCHVKGKRIDLGCAATCPTAKPGEDVTCCSRDKCNPHPLQRPR.

An N-terminal signal peptide occupies residues 1-21 (MKTLLLTLVVVTIVCLDLGDS). 5 disulfides stabilise this stretch: Cys-24-Cys-41, Cys-34-Cys-62, Cys-47-Cys-51, Cys-66-Cys-77, and Cys-78-Cys-83.

Belongs to the three-finger toxin family. Long-chain subfamily. Type II alpha-neurotoxin sub-subfamily. Expressed by the venom gland.

The protein resides in the secreted. Functionally, binds with high affinity to muscular (alpha-1/CHRNA1) and neuronal (alpha-7/CHRNA7) nicotinic acetylcholine receptor (nAChR) and inhibits acetylcholine from binding to the receptor, thereby impairing neuromuscular and neuronal transmission. This Drysdalia coronoides (White-lipped snake) protein is Long neurotoxin 73.